A 208-amino-acid polypeptide reads, in one-letter code: Guanylate kinase (208 aa).

Positions 4 to 185 constitute a Guanylate kinase-like domain; the sequence is GNLYILSAPS…TLKDLQSILQ (182 aa). 11–18 is an ATP binding site; sequence APSGAGKS.

The protein belongs to the guanylate kinase family.

The protein localises to the cytoplasm. It catalyses the reaction GMP + ATP = GDP + ADP. Its function is as follows. Essential for recycling GMP and indirectly, cGMP. This chain is Guanylate kinase, found in Haemophilus influenzae (strain 86-028NP).